We begin with the raw amino-acid sequence, 241 residues long: Ribonuclease P protein component 3 (241 aa).

Belongs to the eukaryotic/archaeal RNase P protein component 3 family. Consists of a catalytic RNA component and at least 4-5 protein subunits.

It localises to the cytoplasm. The enzyme catalyses Endonucleolytic cleavage of RNA, removing 5'-extranucleotides from tRNA precursor.. Its function is as follows. Part of ribonuclease P, a protein complex that generates mature tRNA molecules by cleaving their 5'-ends. In Methanococcoides burtonii (strain DSM 6242 / NBRC 107633 / OCM 468 / ACE-M), this protein is Ribonuclease P protein component 3.